The chain runs to 178 residues: MDSQGPIILEKSIKIEEVIKIANTSIIDIVTKTVTPEIKAPYELVDVEYDKMGSDYILSILVDKEGGITVEDTSDLTNIISPLLDTIDPDPFPNQYMLEVSSPGLERPLKTADSLKAAVGSYINVSLYQAIDKVKVFQGDLLAFDGETLTIDYLDKTRHKIVNIPYQVVAKVRMAVKL.

The protein belongs to the RimP family.

The protein localises to the cytoplasm. Required for maturation of 30S ribosomal subunits. The sequence is that of Ribosome maturation factor RimP from Streptococcus pyogenes serotype M5 (strain Manfredo).